We begin with the raw amino-acid sequence, 274 residues long: 4-hydroxy-tetrahydrodipicolinate reductase (274 aa).

NAD(+)-binding positions include 11 to 16 and E37; that span reads GGSGRM. NADP(+) is bound at residue R38. NAD(+) is bound by residues 101-103 and 125-128; these read GTT and APNM. H158 (proton donor/acceptor) is an active-site residue. H159 lines the (S)-2,3,4,5-tetrahydrodipicolinate pocket. The Proton donor role is filled by K162. (S)-2,3,4,5-tetrahydrodipicolinate is bound at residue 168–169; sequence GT.

Belongs to the DapB family.

It is found in the cytoplasm. The catalysed reaction is (S)-2,3,4,5-tetrahydrodipicolinate + NAD(+) + H2O = (2S,4S)-4-hydroxy-2,3,4,5-tetrahydrodipicolinate + NADH + H(+). It carries out the reaction (S)-2,3,4,5-tetrahydrodipicolinate + NADP(+) + H2O = (2S,4S)-4-hydroxy-2,3,4,5-tetrahydrodipicolinate + NADPH + H(+). It functions in the pathway amino-acid biosynthesis; L-lysine biosynthesis via DAP pathway; (S)-tetrahydrodipicolinate from L-aspartate: step 4/4. In terms of biological role, catalyzes the conversion of 4-hydroxy-tetrahydrodipicolinate (HTPA) to tetrahydrodipicolinate. The protein is 4-hydroxy-tetrahydrodipicolinate reductase of Shewanella pealeana (strain ATCC 700345 / ANG-SQ1).